The chain runs to 219 residues: Chloramphenicol acetyltransferase (219 aa).

His-190 functions as the Proton acceptor in the catalytic mechanism.

Belongs to the chloramphenicol acetyltransferase family. As to quaternary structure, homotrimer.

It carries out the reaction chloramphenicol + acetyl-CoA = chloramphenicol 3-acetate + CoA. In terms of biological role, this enzyme is an effector of chloramphenicol resistance in bacteria. The sequence is that of Chloramphenicol acetyltransferase (catQ) from Clostridium perfringens.